Reading from the N-terminus, the 460-residue chain is Bifunctional protein GlmU (460 aa).

Residues 1 to 229 (MTNYAIILAA…FNESLGVNDR (229 aa)) are pyrophosphorylase. Residues 8–11 (LAAG), Lys22, Gln72, and 77–78 (GT) each bind UDP-N-acetyl-alpha-D-glucosamine. Asp102 is a binding site for Mg(2+). Positions 139, 154, 169, and 227 each coordinate UDP-N-acetyl-alpha-D-glucosamine. Asn227 lines the Mg(2+) pocket. The tract at residues 230 to 250 (VALATAETVMRQRITQKHMVN) is linker. The segment at 251-460 (GVTFQNPETV…RLAHHPSRSK (210 aa)) is N-acetyltransferase. UDP-N-acetyl-alpha-D-glucosamine-binding residues include Arg332 and Lys350. The active-site Proton acceptor is the His362. UDP-N-acetyl-alpha-D-glucosamine contacts are provided by Tyr365 and Asn376. Acetyl-CoA-binding positions include Ala379, 385–386 (NY), Ser404, Ala422, and Arg439.

In the N-terminal section; belongs to the N-acetylglucosamine-1-phosphate uridyltransferase family. The protein in the C-terminal section; belongs to the transferase hexapeptide repeat family. As to quaternary structure, homotrimer. The cofactor is Mg(2+).

The protein resides in the cytoplasm. The catalysed reaction is alpha-D-glucosamine 1-phosphate + acetyl-CoA = N-acetyl-alpha-D-glucosamine 1-phosphate + CoA + H(+). It carries out the reaction N-acetyl-alpha-D-glucosamine 1-phosphate + UTP + H(+) = UDP-N-acetyl-alpha-D-glucosamine + diphosphate. The protein operates within nucleotide-sugar biosynthesis; UDP-N-acetyl-alpha-D-glucosamine biosynthesis; N-acetyl-alpha-D-glucosamine 1-phosphate from alpha-D-glucosamine 6-phosphate (route II): step 2/2. Its pathway is nucleotide-sugar biosynthesis; UDP-N-acetyl-alpha-D-glucosamine biosynthesis; UDP-N-acetyl-alpha-D-glucosamine from N-acetyl-alpha-D-glucosamine 1-phosphate: step 1/1. It participates in bacterial outer membrane biogenesis; LPS lipid A biosynthesis. Catalyzes the last two sequential reactions in the de novo biosynthetic pathway for UDP-N-acetylglucosamine (UDP-GlcNAc). The C-terminal domain catalyzes the transfer of acetyl group from acetyl coenzyme A to glucosamine-1-phosphate (GlcN-1-P) to produce N-acetylglucosamine-1-phosphate (GlcNAc-1-P), which is converted into UDP-GlcNAc by the transfer of uridine 5-monophosphate (from uridine 5-triphosphate), a reaction catalyzed by the N-terminal domain. The protein is Bifunctional protein GlmU of Streptococcus pyogenes serotype M28 (strain MGAS6180).